The chain runs to 926 residues: Alpha-L-rhamnosidase (926 aa).

The first 25 residues, 1 to 25 (MILHKSVFKSYIYVLTYFVFFSVMS), serve as a signal peptide directing secretion. Residue cysteine 26 is the site of N-palmitoyl cysteine attachment. A lipid anchor (S-diacylglycerol cysteine) is attached at cysteine 26. Alpha-L-rhamnose contacts are provided by residues aspartate 504, 508–510 (RDE), aspartate 517, and tryptophan 569. Residue glutamate 510 is the Proton donor of the active site. Glutamate 779 functions as the Proton acceptor in the catalytic mechanism. Alpha-L-rhamnose is bound at residue histidine 800.

This sequence belongs to the glycosyl hydrolase 78 family.

Its subcellular location is the cell membrane. It catalyses the reaction Hydrolysis of terminal non-reducing alpha-L-rhamnose residues in alpha-L-rhamnosides.. Alpha-L-rhamnosidase involved in ulvan degradation. Ulvan is the main polysaccharide component of the Ulvales (green seaweed) cell wall. It is composed of disaccharide building blocks comprising 3-sulfated rhamnose (Rha3S) linked to D-glucuronic acid (GlcA), L-iduronic acid (IduA), or D-xylose (Xyl). Alpha-L-rhamnosidase converts Rha-Xyl-Rha3S, the product of a sulfatase acting on Rha3S-Xyl-Rha3S oligosaccharides, to Rha and Xyl-Rha3S. The enzyme is able to degrade p-nitrophenyl-alpha-L-rhamnopyranoside (PNP-Rha) in vitro. This Formosa agariphila (strain DSM 15362 / KCTC 12365 / LMG 23005 / KMM 3901 / M-2Alg 35-1) protein is Alpha-L-rhamnosidase.